The sequence spans 489 residues: Zeta-carotene desaturase (489 aa).

The protein belongs to the zeta carotene desaturase family. Requires NAD(+) as cofactor. NADP(+) serves as cofactor. It depends on FAD as a cofactor.

It catalyses the reaction 9,9'-di-cis-zeta-carotene + 2 a quinone = 7,7',9,9'-tetra-cis-lycopene + 2 a quinol. Its pathway is carotenoid biosynthesis; lycopene biosynthesis. In terms of biological role, catalyzes the conversion of zeta-carotene to lycopene via the intermediary of neurosporene. It carries out two consecutive desaturations (introduction of double bonds) at positions C-7 and C-7'. This chain is Zeta-carotene desaturase (crtQ), found in Synechocystis sp. (strain ATCC 27184 / PCC 6803 / Kazusa).